A 541-amino-acid polypeptide reads, in one-letter code: Glutamyl-tRNA(Gln) amidotransferase subunit B, mitochondrial (541 aa).

This sequence belongs to the GatB/GatE family. GatB subfamily. As to quaternary structure, subunit of the heterotrimeric GatFAB amidotransferase (AdT) complex, composed of A (HER2), B (PET112) and F (YGR102C) subunits.

The protein resides in the mitochondrion. It catalyses the reaction L-glutamyl-tRNA(Gln) + L-glutamine + ATP + H2O = L-glutaminyl-tRNA(Gln) + L-glutamate + ADP + phosphate + H(+). Allows the formation of correctly charged Gln-tRNA(Gln) through the transamidation of misacylated Glu-tRNA(Gln) in the mitochondria. The reaction takes place in the presence of glutamine and ATP through an activated gamma-phospho-Glu-tRNA(Gln). This chain is Glutamyl-tRNA(Gln) amidotransferase subunit B, mitochondrial, found in Saccharomyces cerevisiae (strain ATCC 204508 / S288c) (Baker's yeast).